The primary structure comprises 367 residues: 2,6-dihydropseudooxynicotine hydrolase (367 aa).

Residues Glu-148, Ser-217, Asp-300, and His-329 contribute to the active site.

This sequence belongs to the AB hydrolase superfamily. In terms of assembly, homodimer.

It catalyses the reaction 2,6-dihydroxypseudooxynicotine + H2O = 2,6-dihydroxypyridine + 4-(methylamino)butanoate + H(+). It functions in the pathway alkaloid degradation; nicotine degradation; 2,6-dihydroxypyridine and 4-(methylamino)butanoate from 6-hydroxypseudooxynicotine: step 2/2. In terms of biological role, L-nicotine is used as a growth substrate. Plays a role in nicotine catabolism by cleaving a C-C bond in 2,6-dihydroxypseudooxynicotine. This Paenarthrobacter nicotinovorans (Arthrobacter nicotinovorans) protein is 2,6-dihydropseudooxynicotine hydrolase.